The chain runs to 209 residues: UPF0319 protein VFMJ11_1730 (209 aa).

The N-terminal stretch at 1-21 is a signal peptide; it reads MKIQSIFAASFCLLSSISAHA.

It belongs to the UPF0319 family.

The protein is UPF0319 protein VFMJ11_1730 of Aliivibrio fischeri (strain MJ11) (Vibrio fischeri).